Here is a 180-residue protein sequence, read N- to C-terminus: UPF0227 protein CKO_01948 (180 aa).

The protein belongs to the UPF0227 family.

The polypeptide is UPF0227 protein CKO_01948 (Citrobacter koseri (strain ATCC BAA-895 / CDC 4225-83 / SGSC4696)).